The chain runs to 409 residues: 5-aminolevulinate synthase (409 aa).

3 residues coordinate succinyl-CoA: Arg-21, Ser-137, and Lys-156. Positions 189, 217, and 245 each coordinate pyridoxal 5'-phosphate. The active site involves Lys-248. At Lys-248 the chain carries N6-(pyridoxal phosphate)lysine. The pyridoxal 5'-phosphate site is built by Ser-277 and Thr-278. Thr-365 contributes to the succinyl-CoA binding site.

This sequence belongs to the class-II pyridoxal-phosphate-dependent aminotransferase family. Homodimer. Requires pyridoxal 5'-phosphate as cofactor.

The enzyme catalyses succinyl-CoA + glycine + H(+) = 5-aminolevulinate + CO2 + CoA. Its pathway is porphyrin-containing compound metabolism; protoporphyrin-IX biosynthesis; 5-aminolevulinate from glycine: step 1/1. The polypeptide is 5-aminolevulinate synthase (hemA) (Rhodobacter capsulatus (strain ATCC BAA-309 / NBRC 16581 / SB1003)).